A 602-amino-acid polypeptide reads, in one-letter code: MRQRSKKGMRSKEEVSQLRTPIVCVMGHVDHGKTTLLDRIRGTTVAQYEAGAITQHIGATEIPLSVIQQFCGSGFKANLMVPGLLFIDTPGHHAFTSLRSRGGSLADLAILIVDINEGFQPQTIESINILKRFKTPFVVAANKIDRIPGWRPVENAPMEKSLAGQTERVVETLETKIYELVGELYKYGFDSNRYDRIADFTKTVGIIPVSAITGEGIPDLLLVLVGLAQRFLKQNLVIESSRPGMGTILEVKEERGLGTTLDVILYDGMISVGDTIVVGTPREPIITKVRALLKPRPLKEIRSEERFTPVKHVVAASGIKVSAPKLETALAGSTIRVVGEGEDPEAIAKEIRSEIEAVRIDTDTVGVILKADTIGSLEGLVGELRAKNIPIHVADVGPVTRRDVIRAAAIKDPLLSVILGFNVEILPDALSEIQKLDIPVFQSDVIYTLLESYEEWMEEKKMQMEQERLEAIVKPGCVRILPDCVFRQSKPAIVGVQVVGGTISHNVPLIREDGAVVGTIRGIQQRNENIPMATVGQEVAISIDGPTVGRQIHEGDLLYVNIPEKHARIIEQELKQKMSQDEIEVFEKFLEIKRKKDMFWGR.

Positions 18-233 constitute a tr-type G domain; it reads LRTPIVCVMG…LVGLAQRFLK (216 aa). The tract at residues 27-34 is G1; that stretch reads GHVDHGKT. 27-34 provides a ligand contact to GTP; sequence GHVDHGKT. Positions 52-56 are G2; the sequence is AITQH. The interval 88–91 is G3; the sequence is DTPG. GTP-binding positions include 88–92 and 142–145; these read DTPGH and NKID. Residues 142-145 are G4; the sequence is NKID. The G5 stretch occupies residues 210 to 212; it reads SAI.

It belongs to the TRAFAC class translation factor GTPase superfamily. Classic translation factor GTPase family. IF-2 subfamily.

Its function is as follows. Function in general translation initiation by promoting the binding of the formylmethionine-tRNA to ribosomes. Seems to function along with eIF-2. The chain is Probable translation initiation factor IF-2 from Methanothrix thermoacetophila (strain DSM 6194 / JCM 14653 / NBRC 101360 / PT) (Methanosaeta thermophila).